The primary structure comprises 459 residues: MADLASHPVGQPLGGGGVSFGTDGIRGRVGTVMTPALALQVGYWSGQVLPGDAPVLLGMDSRSSGPMLVAALEAGLTAAGREVWTLGLCPTPAVARLVNQFQAAGGLMVSASHNPPEDNGIKLFGPSGAKLSRDQQQAIEAGLRGEVRPALTSCGPTQRRTELLESYTALLENSLEGRRLDGRRIVLDLCWGSATSCAESLFRRLGAEVIALHSQPDGAAINVGCGSTHLEPLRQAVMEHGAEMGFAFDGDADRVLAVDGQGRLVDGDHILYLWGSALADADALPQQRLVATVMSNLGFERAWTARGGQLERTAVGDQHVHAAMAELGAVLGGEQSGHIISADHGMSGDGVLTALQLAALLQPGETLSDRVDQSFRSFPQRLRNVRVPDRDRRKGWQQCDGLTTAIAAAEAAMGDEGRVLVRASGTEPLLRVMVEASSQEQVDHWTDHLSELADQLLNV.

The active-site Phosphoserine intermediate is the Ser-112. Mg(2+) is bound by residues Ser-112, Asp-249, Asp-251, and Asp-253. Ser-112 carries the post-translational modification Phosphoserine.

Belongs to the phosphohexose mutase family. Mg(2+) serves as cofactor. Post-translationally, activated by phosphorylation.

It carries out the reaction alpha-D-glucosamine 1-phosphate = D-glucosamine 6-phosphate. In terms of biological role, catalyzes the conversion of glucosamine-6-phosphate to glucosamine-1-phosphate. In Synechococcus sp. (strain RCC307), this protein is Phosphoglucosamine mutase.